The following is a 201-amino-acid chain: Transcriptional regulator GfcR (201 aa).

Belongs to the purine/pyrimidine phosphoribosyltransferase family. GfcR subfamily.

The chain is Transcriptional regulator GfcR from Methanobrevibacter smithii (strain ATCC 35061 / DSM 861 / OCM 144 / PS).